The following is a 242-amino-acid chain: tRNA (guanine-N(1)-)-methyltransferase (242 aa).

Residues Gly-111 and 130-135 contribute to the S-adenosyl-L-methionine site; that span reads IGDYVL.

Belongs to the RNA methyltransferase TrmD family. In terms of assembly, homodimer.

The protein localises to the cytoplasm. The catalysed reaction is guanosine(37) in tRNA + S-adenosyl-L-methionine = N(1)-methylguanosine(37) in tRNA + S-adenosyl-L-homocysteine + H(+). Specifically methylates guanosine-37 in various tRNAs. The sequence is that of tRNA (guanine-N(1)-)-methyltransferase from Onion yellows phytoplasma (strain OY-M).